The primary structure comprises 566 residues: Proline--tRNA ligase (566 aa).

This sequence belongs to the class-II aminoacyl-tRNA synthetase family. ProS type 1 subfamily. Homodimer.

Its subcellular location is the cytoplasm. It catalyses the reaction tRNA(Pro) + L-proline + ATP = L-prolyl-tRNA(Pro) + AMP + diphosphate. Functionally, catalyzes the attachment of proline to tRNA(Pro) in a two-step reaction: proline is first activated by ATP to form Pro-AMP and then transferred to the acceptor end of tRNA(Pro). As ProRS can inadvertently accommodate and process non-cognate amino acids such as alanine and cysteine, to avoid such errors it has two additional distinct editing activities against alanine. One activity is designated as 'pretransfer' editing and involves the tRNA(Pro)-independent hydrolysis of activated Ala-AMP. The other activity is designated 'posttransfer' editing and involves deacylation of mischarged Ala-tRNA(Pro). The misacylated Cys-tRNA(Pro) is not edited by ProRS. The chain is Proline--tRNA ligase from Bacillus cytotoxicus (strain DSM 22905 / CIP 110041 / 391-98 / NVH 391-98).